Here is a 303-residue protein sequence, read N- to C-terminus: Polyisoprenyl-teichoic acid--peptidoglycan teichoic acid transferase TagU (303 aa).

The Cytoplasmic segment spans residues 1–4; that stretch reads MKKK. A helical; Signal-anchor for type II membrane protein membrane pass occupies residues 5-25; that stretch reads ILFWVLGILGVLIIGGGIYAY. The Extracellular portion of the chain corresponds to 26–303; the sequence is NVYSSVSNTL…KLRSHLEVTK (278 aa).

It belongs to the LytR/CpsA/Psr (LCP) family.

The protein resides in the cell membrane. The protein operates within cell wall biogenesis. May catalyze the final step in cell wall teichoic acid biosynthesis, the transfer of the anionic cell wall polymers (APs) from their lipid-linked precursor to the cell wall peptidoglycan (PG). The protein is Polyisoprenyl-teichoic acid--peptidoglycan teichoic acid transferase TagU of Bacillus cereus (strain AH820).